We begin with the raw amino-acid sequence, 1469 residues long: Protein BCL9 homolog (1469 aa).

A compositionally biased stretch (polar residues) spans 1 to 16 (MLSTTMPRSPTQQQPQ). Disordered regions lie at residues 1–131 (MLST…NVSA), 161–187 (SNKA…KEEP), 200–222 (EERE…NAQD), 422–442 (ENSK…QSDP), and 454–474 (GGSS…DSIS). Ser9 is subject to Phosphoserine. Thr11 is modified (phosphothreonine). Positions 17–34 (PNSDASSTSASGSNPGAA) are enriched in low complexity. Composition is skewed to polar residues over residues 40 to 60 (SAAS…TLSP) and 90 to 113 (SGNN…NSCL). Over residues 116-130 (SPQNSSEHSNSSNVS) the composition is skewed to low complexity. Ser206 carries the post-translational modification Phosphoserine. Thr208 carries the phosphothreonine modification. Position 210 is a phosphoserine (Ser210). Composition is skewed to polar residues over residues 422–438 (ENSK…SFVD) and 455–474 (GSSN…DSIS). The interval 511–555 (SLQGVKVPDENLTPQQRQHREEQLAKIKKMNQFLFPENENSVGAN) is ARM-binding. Disordered regions lie at residues 728–830 (GGKP…TSTV), 844–913 (CFQA…RSPV), and 961–991 (QASA…PPPN). Over residues 731 to 745 (PRQVTGTVVPQQQTP) the composition is skewed to low complexity. Positions 770–781 (IQRSASVPIATQ) are enriched in polar residues. Residues 782–796 (SPNPSSPNNLSLPSP) are compositionally biased toward low complexity. 2 stretches are compositionally biased toward polar residues: residues 806–830 (PTNS…TSTV) and 844–880 (CFQA…TPLS). Residues Ser883, Ser905, and Ser911 each carry the phosphoserine modification. Residues 904–913 (PSPQGQRSPV) show a composition bias toward polar residues.

Belongs to the BCL9 family. As to quaternary structure, binds to ARM and PYGO.

It localises to the nucleus. Functionally, involved in signal transduction through the Wnt pathway. This chain is Protein BCL9 homolog (lgs), found in Drosophila melanogaster (Fruit fly).